A 280-amino-acid chain; its full sequence is Ribosomal RNA small subunit methyltransferase A (280 aa).

Asparagine 27, leucine 29, glycine 54, glutamate 76, aspartate 102, and asparagine 122 together coordinate S-adenosyl-L-methionine.

Belongs to the class I-like SAM-binding methyltransferase superfamily. rRNA adenine N(6)-methyltransferase family. RsmA subfamily.

It is found in the cytoplasm. It carries out the reaction adenosine(1518)/adenosine(1519) in 16S rRNA + 4 S-adenosyl-L-methionine = N(6)-dimethyladenosine(1518)/N(6)-dimethyladenosine(1519) in 16S rRNA + 4 S-adenosyl-L-homocysteine + 4 H(+). Specifically dimethylates two adjacent adenosines (A1518 and A1519) in the loop of a conserved hairpin near the 3'-end of 16S rRNA in the 30S particle. May play a critical role in biogenesis of 30S subunits. This Oleidesulfovibrio alaskensis (strain ATCC BAA-1058 / DSM 17464 / G20) (Desulfovibrio alaskensis) protein is Ribosomal RNA small subunit methyltransferase A.